Here is a 136-residue protein sequence, read N- to C-terminus: Histone H3.3 (136 aa).

Residues 1-42 (MARTKQTARKSTGGKAPRKQLASKAARKSAPVSGGVKKPHRY) are disordered. Lys5 is modified (N6,N6,N6-trimethyllysine; alternate). At Lys5 the chain carries N6,N6-dimethyllysine; alternate. Lys5 and Lys10 each carry N6-methyllysine; alternate. Lys10 carries the post-translational modification N6-acetyllysine; alternate. Ser11 is modified (phosphoserine). Lys15 is subject to N6,N6-dimethyllysine; alternate. An N6-acetyllysine; alternate mark is found at Lys15, Lys19, Lys24, Lys28, and Lys37. An N6-methyllysine; alternate mark is found at Lys19, Lys24, Lys28, and Lys37. 2 positions are modified to N6,N6,N6-trimethyllysine; alternate: Lys28 and Lys37. Lys28 and Lys37 each carry N6,N6-dimethyllysine; alternate. N6-acetyllysine is present on residues Lys57 and Lys65. Lys80 carries the post-translational modification N6,N6,N6-trimethyllysine; alternate. Residue Lys80 is modified to N6,N6-dimethyllysine; alternate. N6-methyllysine; alternate is present on Lys80.

It belongs to the histone H3 family. In terms of assembly, the nucleosome is a histone octamer containing two molecules each of H2A, H2B, H3 and H4 assembled in one H3-H4 heterotetramer and two H2A-H2B heterodimers. The octamer wraps approximately 147 bp of DNA. Post-translationally, phosphorylated to form H3S10ph. H3S10ph promotes subsequent H3K14ac formation and is required for transcriptional activation through TBP recruitment to the promoters. In terms of processing, mono-, di- and trimethylated by the COMPASS complex to form H3K4me1/2/3. H3K4me activates gene expression by regulating transcription elongation and plays a role in telomere length maintenance. H3K4me enrichment correlates with transcription levels, and occurs in a 5' to 3' gradient with H3K4me3 enrichment at the 5'-end of genes, shifting to H3K4me2 and then H3K4me1. Methylated by SET2 to form H3K36me. H3K36me represses gene expression. Methylated by DOT1 to form H3K79me. H3K79me is required for association of SIR proteins with telomeric regions and for telomeric silencing. The COMPASS-mediated formation of H3K4me2/3 and the DOT1-mediated formation of H3K79me require H2BK123ub1. Acetylation of histone H3 leads to transcriptional activation. H3K14ac formation by GCN5 is promoted by H3S10ph. H3K14ac can also be formed by ESA1. H3K56ac formation occurs predominantly in newly synthesized H3 molecules during G1, S and G2/M of the cell cycle and may be involved in DNA repair.

It is found in the nucleus. The protein resides in the chromosome. Core component of nucleosome. Nucleosomes wrap and compact DNA into chromatin, limiting DNA accessibility to the cellular machineries which require DNA as a template. Histones thereby play a central role in transcription regulation, DNA repair, DNA replication and chromosomal stability. DNA accessibility is regulated via a complex set of post-translational modifications of histones, also called histone code, and nucleosome remodeling. This chain is Histone H3.3 (HHT3), found in Lodderomyces elongisporus (strain ATCC 11503 / CBS 2605 / JCM 1781 / NBRC 1676 / NRRL YB-4239) (Yeast).